A 114-amino-acid chain; its full sequence is uncharacterized protein (114 aa).

In terms of domain architecture, ABM spans 13 to 99; sequence YYAVIFSSVK…VWYESYAVRV (87 aa).

This is an uncharacterized protein from Bacillus subtilis (strain 168).